The sequence spans 298 residues: Pyridoxal 5'-phosphate synthase subunit PdxS (298 aa).

Position 24 (aspartate 24) interacts with D-ribose 5-phosphate. Lysine 81 acts as the Schiff-base intermediate with D-ribose 5-phosphate in catalysis. Position 153 (glycine 153) interacts with D-ribose 5-phosphate. Arginine 165 lines the D-glyceraldehyde 3-phosphate pocket. D-ribose 5-phosphate contacts are provided by residues glycine 214 and glycine 235–serine 236.

This sequence belongs to the PdxS/SNZ family. In the presence of PdxT, forms a dodecamer of heterodimers.

It catalyses the reaction aldehydo-D-ribose 5-phosphate + D-glyceraldehyde 3-phosphate + L-glutamine = pyridoxal 5'-phosphate + L-glutamate + phosphate + 3 H2O + H(+). The protein operates within cofactor biosynthesis; pyridoxal 5'-phosphate biosynthesis. In terms of biological role, catalyzes the formation of pyridoxal 5'-phosphate from ribose 5-phosphate (RBP), glyceraldehyde 3-phosphate (G3P) and ammonia. The ammonia is provided by the PdxT subunit. Can also use ribulose 5-phosphate and dihydroxyacetone phosphate as substrates, resulting from enzyme-catalyzed isomerization of RBP and G3P, respectively. This is Pyridoxal 5'-phosphate synthase subunit PdxS from Halalkalibacterium halodurans (strain ATCC BAA-125 / DSM 18197 / FERM 7344 / JCM 9153 / C-125) (Bacillus halodurans).